Reading from the N-terminus, the 265-residue chain is MAVGKNKRLTKGGKKGAKKKVVDPFTKKEWYDVKAPSMFAVRQIGKTLVTRSQGTKIASDNLKGRVFEVSLADLQNDEVTFRKFKLIAEEVQGRNVLTNFSGMSLTRDKLCSMVKKWQTLIEANVDVKTTDGYLLRVFAIGFTKKRNNQVKKTCYAQHAQVKAIRKKMVEIVSREVSSNDMKEVVNKLIPDSIGKDIEKSCQGIYPLHDVLIHKVKVLKKPKFDVGKLMELHGEGSTTTSKGVTSEGGEKVDRVDGYEPPVLQNV.

The disordered stretch occupies residues 234–256 (EGSTTTSKGVTSEGGEKVDRVDG). Residues 247–256 (GGEKVDRVDG) show a composition bias toward basic and acidic residues.

It belongs to the eukaryotic ribosomal protein eS1 family. In terms of assembly, component of the small ribosomal subunit. Mature ribosomes consist of a small (40S) and a large (60S) subunit. The 40S subunit contains about 33 different proteins and 1 molecule of RNA (18S). The 60S subunit contains about 49 different proteins and 3 molecules of RNA (28S, 5.8S and 5S).

Its subcellular location is the cytoplasm. The sequence is that of Small ribosomal subunit protein eS1 from Aplysia californica (California sea hare).